The chain runs to 29 residues: Glucagon (29 aa).

Position 2 is a phosphoserine (serine 2).

This sequence belongs to the glucagon family.

The protein localises to the secreted. In terms of biological role, glucagon plays a key role in glucose metabolism and homeostasis. Regulates blood glucose by increasing gluconeogenesis and decreasing glycolysis. This is Glucagon (GCG) from Chinchilla chinchilla (Short-tailed chinchilla).